A 1173-amino-acid polypeptide reads, in one-letter code: MEELSADEIRRRRLARLAGGQTSQPTTPLTSPQRENPPGPPIAASAPGPSQSLGLNVHNMTPATSPIGAAGVAHRSQSSEGVSSLSSSPSNSLETQSQSLSRSQSMDIDGVSCEKSMSQVDVDSGIENMEVDENDRREKRSLSDKEPSSGPEVSEEQALQLVCKIFRVSWKDRDRDVIFLSSLSAQFKQNPKEVFSDFKDLIGQILMEVLMMSTQTRDENPFASLTATSQPIATAARSPDRNLMLNTGSSSGTSPMFCNMGSFSTSSLSSLGASGGASNWDSYSDHFTIETCKETDMLNYLIECFDRVGIEEKKAPKMCSQPAVSQLLSNIRSQCISHTALVLQGSLTQPRSLQQPSFLVPYMLCRNLPYGFIQELVRTTHQDEEVFKQIFIPILQGLALAAKECSLESDYFKYPLMALGELCETKFGKTHPMCNLVASLPLWLPKSLSPGSGRELQRLSYLGAFFSFSVFAEDDAKVVEKYFSGPAITLENTRVVSQSLQHYLELGRQELFKILHSILLNGETREAALSYMAALVNANMKKAQMQADDRLVSTDGFMLNLLWVLQQLSTKIKLETVDPTYIFHPRCRITLPNDETRINATMEDVNERLTELYGDQPPFSEPKFPTECFFLTLHAHHLSILPSCRRYIRRLRAIRELNRTVEDLKNNESQWKDSPLATRHREMLKRCKTQLKKLVRCKACADAGLLDESFLRRCLNFYGLLIQLMLRILDPAYPDVTLPLNSEVPKVFAALPEFYVEDVAEFLFFIVQYSPQVLYEPCTQDIVMFLVVMLCNQNYIRNPYLVAKLVEVMFMTNPSVQPRTQKFFEMIENHPLSTKLLVPSLMKFYTDVEHTGATSEFYDKFTIRYHISTIFKSLWQNIAHHGTFMEEFNSGKQFVRYINMLINDTTFLLDESLESLKRIHEVQEEMKNKEQWDQLPRDQQQARQSQLAQDERVSRSYLALATETVDMFHLLTKQVQKPFLRPELGPRLAAMLNFNLQQLCGPKCRDLKVENPEKYGFEPKKLLDQLTDIYLQLDCARFAKAIADDQRSYSKELFEEVISKMRKAGIKSTIAIEKFKLLAEKVEEIVAKNARAEIDYSDAPDEFRDPLMDTLMTDPVRLPSGTVMDRSIILRHLLNSPTDPFNRQMLTESMLEPVPELKEQIQAWMREKQSSDH.

M1 carries the N-acetylmethionine modification. Residues 1–155 form a disordered region; it reads MEELSADEIR…EPSSGPEVSE (155 aa). The span at 16-33 shows a compositional bias: low complexity; that stretch reads RLAGGQTSQPTTPLTSPQ. S23 and S31 each carry phosphoserine. Polar residues predominate over residues 51 to 64; it reads QSLGLNVHNMTPAT. The segment covering 76–99 has biased composition (low complexity); sequence SQSSEGVSSLSSSPSNSLETQSQS. Residues S84, S88, S90, S101, S103, S105, and S124 each carry the phosphoserine modification. A compositionally biased stretch (basic and acidic residues) spans 134-147; sequence NDRREKRSLSDKEP. Residues S238, S674, and S840 each carry the phosphoserine modification. Residues 928–948 form a disordered region; that stretch reads NKEQWDQLPRDQQQARQSQLA. The span at 937–948 shows a compositional bias: low complexity; sequence RDQQQARQSQLA. The U-box domain maps to 1098-1171; sequence DAPDEFRDPL…QAWMREKQSS (74 aa). S1136 bears the Phosphoserine mark.

This sequence belongs to the ubiquitin conjugation factor E4 family. As to quaternary structure, interacts with VCP. Interacts with STUB1/CHIP and UNC45B. Proteolytically cleaved by caspases during apoptosis. Cleaved efficiently at Asp-123 by caspase-6 and granzyme B. Cleaved with approximately 10-fold less efficiency at Asp-109 by caspase-3 and caspase-7. In terms of tissue distribution, expressed predominantly in neuronal tissues. Also detected in liver, heart, brain, kidney and testis.

The protein resides in the cytoplasm. Its subcellular location is the nucleus. The enzyme catalyses S-ubiquitinyl-[E2 ubiquitin-conjugating enzyme]-L-cysteine + [acceptor protein]-L-lysine = [E2 ubiquitin-conjugating enzyme]-L-cysteine + N(6)-ubiquitinyl-[acceptor protein]-L-lysine.. Its pathway is protein modification; protein ubiquitination. Its function is as follows. Ubiquitin-protein ligase that probably functions as an E3 ligase in conjunction with specific E1 and E2 ligases. May also function as an E4 ligase mediating the assembly of polyubiquitin chains on substrates ubiquitinated by another E3 ubiquitin ligase. May regulate myosin assembly in striated muscles together with STUB1 and VCP/p97 by targeting myosin chaperone UNC45B for proteasomal degradation. In Mus musculus (Mouse), this protein is Ubiquitin conjugation factor E4 B.